Here is a 93-residue protein sequence, read N- to C-terminus: UPF0358 protein lwe1048 (93 aa).

The protein belongs to the UPF0358 family.

This Listeria welshimeri serovar 6b (strain ATCC 35897 / DSM 20650 / CCUG 15529 / CIP 8149 / NCTC 11857 / SLCC 5334 / V8) protein is UPF0358 protein lwe1048.